A 693-amino-acid polypeptide reads, in one-letter code: eEF1A lysine and N-terminal methyltransferase (693 aa).

This sequence belongs to the methyltransferase superfamily.

The enzyme catalyses L-lysyl-[protein] + S-adenosyl-L-methionine = N(6)-methyl-L-lysyl-[protein] + S-adenosyl-L-homocysteine + H(+). The catalysed reaction is N(6)-methyl-L-lysyl-[protein] + S-adenosyl-L-methionine = N(6),N(6)-dimethyl-L-lysyl-[protein] + S-adenosyl-L-homocysteine + H(+). It carries out the reaction N-terminal glycyl-L-lysyl-L-glutamyl-[protein] + 3 S-adenosyl-L-methionine = N-terminal N,N,N-trimethyl-glycyl-L-lysyl-L-glutamyl-[protein] + 3 S-adenosyl-L-homocysteine + 3 H(+). Functionally, dual methyltransferase that catalyzes methylation of elongation factor 1-alpha (eef1a1 and eef1a2) at two different positions, and is therefore involved in the regulation of mRNA translation. Via its C-terminus, methylates the N-terminus of eef1a1 and eef1a2. Via its N-terminus dimethylates lysine residues of eef1a1 and eef1a2. In Xenopus laevis (African clawed frog), this protein is eEF1A lysine and N-terminal methyltransferase (mettl13).